The sequence spans 207 residues: Pyrrolidone-carboxylate peptidase (207 aa).

Catalysis depends on residues E80, C143, and H167.

The protein belongs to the peptidase C15 family. Homotetramer.

It localises to the cytoplasm. It carries out the reaction Release of an N-terminal pyroglutamyl group from a polypeptide, the second amino acid generally not being Pro.. Its function is as follows. Removes 5-oxoproline from various penultimate amino acid residues except L-proline. The protein is Pyrrolidone-carboxylate peptidase of Coprothermobacter proteolyticus (strain ATCC 35245 / DSM 5265 / OCM 4 / BT).